We begin with the raw amino-acid sequence, 378 residues long: Alkaline elastase YaB (378 aa).

Positions 1-27 (MNKKMGKIVAGTALIISVAFSSSIAQA) are cleaved as a signal peptide. Positions 28–110 (AEEAKEKYLI…IEEDAEVTTM (83 aa)) are excised as a propeptide. Residue Gln111 participates in Ca(2+) binding. Positions 114–377 (PWGINRVQAP…SGLVNAEAAT (264 aa)) constitute a Peptidase S8 domain. Asp141 acts as the Charge relay system in catalysis. A Ca(2+)-binding site is contributed by Asp149. His171 serves as the catalytic Charge relay system. Residues Leu182, Asn184, Ile186, Val188, Ala272, Tyr274, and Ala277 each coordinate Ca(2+). The active-site Charge relay system is the Ser324.

The protein belongs to the peptidase S8 family. Ca(2+) is required as a cofactor.

Its subcellular location is the secreted. In terms of biological role, digests elastin efficiently, has a substrate preference for Ala in P1 position. The chain is Alkaline elastase YaB (ale) from Bacillus sp. (strain YaB).